The primary structure comprises 98 residues: NADH-ubiquinone oxidoreductase chain 4L (98 aa).

A run of 3 helical transmembrane segments spans residues 1–21 (MTPV…GLAF), 29–49 (ALLC…LWAL), and 58–78 (VAPM…LALL).

The protein belongs to the complex I subunit 4L family.

Its subcellular location is the mitochondrion membrane. It catalyses the reaction a ubiquinone + NADH + 5 H(+)(in) = a ubiquinol + NAD(+) + 4 H(+)(out). In terms of biological role, core subunit of the mitochondrial membrane respiratory chain NADH dehydrogenase (Complex I) which catalyzes electron transfer from NADH through the respiratory chain, using ubiquinone as an electron acceptor. Part of the enzyme membrane arm which is embedded in the lipid bilayer and involved in proton translocation. This Oncorhynchus clarkii (Cutthroat trout) protein is NADH-ubiquinone oxidoreductase chain 4L (MT-ND4L).